Here is a 441-residue protein sequence, read N- to C-terminus: Glutamate--tRNA ligase 1 (441 aa).

Positions 7–17 match the 'HIGH' region motif; sequence PSPTGYMHIGN. Residues 236–240 carry the 'KMSKS' region motif; it reads KMSKR. K239 lines the ATP pocket.

The protein belongs to the class-I aminoacyl-tRNA synthetase family. Glutamate--tRNA ligase type 1 subfamily. In terms of assembly, monomer.

It is found in the cytoplasm. It catalyses the reaction tRNA(Glu) + L-glutamate + ATP = L-glutamyl-tRNA(Glu) + AMP + diphosphate. Functionally, catalyzes the attachment of glutamate to tRNA(Glu) in a two-step reaction: glutamate is first activated by ATP to form Glu-AMP and then transferred to the acceptor end of tRNA(Glu). This chain is Glutamate--tRNA ligase 1, found in Anaplasma marginale (strain St. Maries).